A 500-amino-acid polypeptide reads, in one-letter code: Histidine ammonia-lyase (500 aa).

The 5-imidazolinone (Ala-Gly) cross-link spans 142 to 144; that stretch reads ASG. Ser-143 carries the post-translational modification 2,3-didehydroalanine (Ser).

Belongs to the PAL/histidase family. Post-translationally, contains an active site 4-methylidene-imidazol-5-one (MIO), which is formed autocatalytically by cyclization and dehydration of residues Ala-Ser-Gly.

It is found in the cytoplasm. It catalyses the reaction L-histidine = trans-urocanate + NH4(+). The protein operates within amino-acid degradation; L-histidine degradation into L-glutamate; N-formimidoyl-L-glutamate from L-histidine: step 1/3. This chain is Histidine ammonia-lyase, found in Macrococcus caseolyticus (strain JCSC5402) (Macrococcoides caseolyticum).